Reading from the N-terminus, the 201-residue chain is MSGLASLVPMVIEQSSRGERAFDIFSRLLRERIIFINGEINDDVSALVCAQLLSLESDNPDKEISLYINSPGGVVTSGFAIYDTMQYVSCPVSTVCMGFAASMGSFLLMAGTPGRRIALPNATILLHQPLGGFQGQASDIQRHAERIGKTKQRMAELYAQHCGRSYEEVERTLDRDHFMTAREAQTWGIVDHVFDTRKKAA.

Residue S102 is the Nucleophile of the active site. The active site involves H127.

The protein belongs to the peptidase S14 family. As to quaternary structure, fourteen ClpP subunits assemble into 2 heptameric rings which stack back to back to give a disk-like structure with a central cavity, resembling the structure of eukaryotic proteasomes.

The protein localises to the cytoplasm. It carries out the reaction Hydrolysis of proteins to small peptides in the presence of ATP and magnesium. alpha-casein is the usual test substrate. In the absence of ATP, only oligopeptides shorter than five residues are hydrolyzed (such as succinyl-Leu-Tyr-|-NHMec, and Leu-Tyr-Leu-|-Tyr-Trp, in which cleavage of the -Tyr-|-Leu- and -Tyr-|-Trp bonds also occurs).. Functionally, cleaves peptides in various proteins in a process that requires ATP hydrolysis. Has a chymotrypsin-like activity. Plays a major role in the degradation of misfolded proteins. The protein is ATP-dependent Clp protease proteolytic subunit 1 of Mesorhizobium japonicum (strain LMG 29417 / CECT 9101 / MAFF 303099) (Mesorhizobium loti (strain MAFF 303099)).